The chain runs to 168 residues: G/U mismatch-specific DNA glycosylase (168 aa).

The protein belongs to the uracil-DNA glycosylase (UDG) superfamily. TDG/mug family. In terms of assembly, binds DNA as a monomer.

The protein localises to the cytoplasm. The catalysed reaction is Specifically hydrolyzes mismatched double-stranded DNA and polynucleotides, releasing free uracil.. Excises ethenocytosine and uracil, which can arise by alkylation or deamination of cytosine, respectively, from the corresponding mispairs with guanine in ds-DNA. It is capable of hydrolyzing the carbon-nitrogen bond between the sugar-phosphate backbone of the DNA and the mispaired base. The complementary strand guanine functions in substrate recognition. Required for DNA damage lesion repair in stationary-phase cells. This is G/U mismatch-specific DNA glycosylase from Escherichia coli O139:H28 (strain E24377A / ETEC).